The sequence spans 141 residues: Large ribosomal subunit protein uL16c (141 aa).

Over residues 1–17 (MLSPKRTKYRKPHRGNR) the composition is skewed to basic residues. The segment at 1-21 (MLSPKRTKYRKPHRGNRKGQA) is disordered.

Belongs to the universal ribosomal protein uL16 family. In terms of assembly, part of the 50S ribosomal subunit.

It is found in the plastid. It localises to the chloroplast. In Ostreococcus tauri, this protein is Large ribosomal subunit protein uL16c.